Here is a 922-residue protein sequence, read N- to C-terminus: Protein translocase subunit SecA (922 aa).

ATP is bound by residues Gln87, 105–109 (GEGKT), and Asp519. Residues 850–891 (HASRQMRSIQGNAQHNSMGSFSGSGHGMGPTALSARSRPENA) are disordered. Over residues 854-865 (QMRSIQGNAQHN) the composition is skewed to polar residues. Residues Cys906, Cys908, Cys917, and Cys918 each coordinate Zn(2+).

This sequence belongs to the SecA family. As to quaternary structure, monomer and homodimer. Part of the essential Sec protein translocation apparatus which comprises SecA, SecYEG and auxiliary proteins SecDF. Other proteins may also be involved. It depends on Zn(2+) as a cofactor.

It localises to the cell inner membrane. The protein resides in the cytoplasm. The catalysed reaction is ATP + H2O + cellular proteinSide 1 = ADP + phosphate + cellular proteinSide 2.. In terms of biological role, part of the Sec protein translocase complex. Interacts with the SecYEG preprotein conducting channel. Has a central role in coupling the hydrolysis of ATP to the transfer of proteins into and across the cell membrane, serving as an ATP-driven molecular motor driving the stepwise translocation of polypeptide chains across the membrane. The chain is Protein translocase subunit SecA from Treponema denticola (strain ATCC 35405 / DSM 14222 / CIP 103919 / JCM 8153 / KCTC 15104).